Consider the following 375-residue polypeptide: Nucleosome assembly protein 1-like 4 (375 aa).

Positions Met-1–Val-31 are disordered. Ala-2 is modified (N-acetylalanine). Phosphoserine occurs at positions 5, 7, and 12. Residues Asn-20–Val-31 show a composition bias toward polar residues. At Thr-51 the chain carries Phosphothreonine. Ser-53 and Ser-54 each carry phosphoserine. Thr-58 is subject to Phosphothreonine. Lys-105 is subject to N6-acetyllysine. The tract at residues Pro-116–Met-137 is disordered. The span at Ser-121 to Met-137 shows a compositional bias: basic and acidic residues. Position 125 is a phosphoserine (Ser-125). Lys-146 bears the N6-acetyllysine mark. A Nuclear localization signal motif is present at residues Ile-265 to His-271. Ser-304 carries the post-translational modification Phosphoserine. Residues Ala-339–Val-375 are disordered.

It belongs to the nucleosome assembly protein (NAP) family. In terms of assembly, interacts with core (H2A, CD2APH2B, H3, H4) and linker (H1) histones. (Microbial infection) Interacts with Chikungunya virus non-structural protein 3 (via C-terminus). Post-translationally, phosphorylated at the G0/G1 boundary but it is not phosphorylated in S-phase. Phosphorylated protein remains in the cytoplasm in a complex with histones during the G0/G1 transition, whereas dephosphorylation triggers its transport into the nucleus at the G1/S-boundary. In terms of processing, polyglutamylated by TTLL4, a modification that occurs exclusively on glutamate residues and results in polyglutamate chains on the gamma-carboxyl group. Some residues may also be monoglycylated but not polyglycylated due to the absence of functional TTLL10 in human. As to expression, ubiquitous. Biallelically expressed in fetal and adult tissues. Highest levels in testis.

The protein resides in the nucleus. Its subcellular location is the cytoplasm. Its function is as follows. Acts as a histone chaperone in nucleosome assembly. This chain is Nucleosome assembly protein 1-like 4, found in Homo sapiens (Human).